The chain runs to 125 residues: UPF0325 protein Ping_0715 (125 aa).

The protein belongs to the UPF0325 family.

This is UPF0325 protein Ping_0715 from Psychromonas ingrahamii (strain DSM 17664 / CCUG 51855 / 37).